A 502-amino-acid chain; its full sequence is Histidine--tRNA ligase (502 aa).

Belongs to the class-II aminoacyl-tRNA synthetase family. As to quaternary structure, homodimer.

It is found in the cytoplasm. It carries out the reaction tRNA(His) + L-histidine + ATP = L-histidyl-tRNA(His) + AMP + diphosphate + H(+). This is Histidine--tRNA ligase from Brucella abortus (strain S19).